The chain runs to 72 residues: UPF0270 protein plu0398 (72 aa).

The protein belongs to the UPF0270 family.

This chain is UPF0270 protein plu0398, found in Photorhabdus laumondii subsp. laumondii (strain DSM 15139 / CIP 105565 / TT01) (Photorhabdus luminescens subsp. laumondii).